Consider the following 249-residue polypeptide: Acidic leucine-rich nuclear phosphoprotein 32 family member A (249 aa).

Thr-15 carries the phosphothreonine modification. Position 17 is a phosphoserine (Ser-17). LRR repeat units lie at residues 18–41 (DVKELVLDNCRSIEGKIEGLTDEF), 43–64 (ELEFLSTINVGLTSVANLPKLN), 65–87 (KLKKLELSDNRISGGLEVLAEKC), and 89–110 (NLTHLNLSGNKIKDLSTIEPLK). The 39-residue stretch at 123–161 (CEVTNLNDYRENVFKLLPQLTYLDGYDRDDKEAPDSDAE) folds into the LRRCT domain. The segment covering 147–156 (GYDRDDKEAP) has biased composition (basic and acidic residues). Residues 147 to 249 (GYDRDDKEAP…EPXDXGEDDD (103 aa)) are disordered. The segment at 150–174 (RDDKEAPDSDAEGYVEGLDDDEEDE) is necessary for tumor-suppressive function. Residues 157 to 230 (DSDAEGYVEG…DEEDEEDVGE (74 aa)) are compositionally biased toward acidic residues. Ser-158 and Ser-204 each carry phosphoserine. The interaction with E4F1 stretch occupies residues 165–249 (EGLDDDEEDE…EPXDXGEDDD (85 aa)).

It belongs to the ANP32 family. As to quaternary structure, component of the SET complex, composed of at least ANP32A, APEX1, HMGB2, NME1, SET and TREX1. Directly interacts with SET. Interacts with ATXN1/SCA1. Interacts with MAP1B. Interacts with ELAVL1. Part of the INHAT (inhibitor of histone acetyltransferases) complex. Interacts with E4F1. Post-translationally, phosphorylated on serine residues, at least in part by casein kinase 2/CK2. Some glutamate residues are glycylated by TTLL8. This modification occurs exclusively on glutamate residues and results in a glycine chain on the gamma-carboxyl group.

It localises to the nucleus. The protein resides in the cytoplasm. The protein localises to the endoplasmic reticulum. Functionally, multifunctional protein that is involved in the regulation of many processes including tumor suppression, apoptosis, cell cycle progression or transcription. Promotes apoptosis by favouring the activation of caspase-9/CASP9 and allowing apoptosome formation. In addition, plays a role in the modulation of histone acetylation and transcription as part of the INHAT (inhibitor of histone acetyltransferases) complex. Inhibits the histone-acetyltranferase activity of EP300/CREBBP (CREB-binding protein) and EP300/CREBBP-associated factor by histone masking. Preferentially binds to unmodified histone H3 and sterically inhibiting its acetylation and phosphorylation leading to cell growth inhibition. Participates in other biochemical processes such as regulation of mRNA nuclear-to-cytoplasmic translocation and stability by its association with ELAVL1 (Hu-antigen R). Plays a role in E4F1-mediated transcriptional repression as well as inhibition of protein phosphatase 2A. This Canis lupus familiaris (Dog) protein is Acidic leucine-rich nuclear phosphoprotein 32 family member A (ANP32A).